Reading from the N-terminus, the 250-residue chain is tRNA (guanine-N(1)-)-methyltransferase (250 aa).

Residues glycine 116 and isoleucine 136–leucine 141 contribute to the S-adenosyl-L-methionine site.

This sequence belongs to the RNA methyltransferase TrmD family. Homodimer.

The protein localises to the cytoplasm. The enzyme catalyses guanosine(37) in tRNA + S-adenosyl-L-methionine = N(1)-methylguanosine(37) in tRNA + S-adenosyl-L-homocysteine + H(+). Its function is as follows. Specifically methylates guanosine-37 in various tRNAs. The sequence is that of tRNA (guanine-N(1)-)-methyltransferase from Pseudomonas putida (strain ATCC 47054 / DSM 6125 / CFBP 8728 / NCIMB 11950 / KT2440).